A 256-amino-acid polypeptide reads, in one-letter code: UPF0246 protein HCH_04801 (256 aa).

Belongs to the UPF0246 family.

This Hahella chejuensis (strain KCTC 2396) protein is UPF0246 protein HCH_04801.